Reading from the N-terminus, the 50-residue chain is Putative protein HokG (50 aa).

Residues 5-25 (YALVAIIVLCCTVLGFTLMVG) traverse the membrane as a helical segment.

The protein belongs to the Hok/Gef family.

It is found in the cell inner membrane. Toxic component of a type I toxin-antitoxin (TA) system. When overexpressed kills cells within minutes; causes collapse of the transmembrane potential and arrest of respiration. Its toxic effect is probably neutralized by an antisense antitoxin Sok RNA. The polypeptide is Putative protein HokG (hokG) (Escherichia coli O157:H7).